The primary structure comprises 180 residues: Large ribosomal subunit protein uL5 (180 aa).

The protein belongs to the universal ribosomal protein uL5 family. In terms of assembly, part of the 50S ribosomal subunit; part of the 5S rRNA/L5/L18/L25 subcomplex. Contacts the 5S rRNA and the P site tRNA. Forms a bridge to the 30S subunit in the 70S ribosome.

Functionally, this is one of the proteins that bind and probably mediate the attachment of the 5S RNA into the large ribosomal subunit, where it forms part of the central protuberance. In the 70S ribosome it contacts protein S13 of the 30S subunit (bridge B1b), connecting the 2 subunits; this bridge is implicated in subunit movement. Contacts the P site tRNA; the 5S rRNA and some of its associated proteins might help stabilize positioning of ribosome-bound tRNAs. The polypeptide is Large ribosomal subunit protein uL5 (Streptococcus thermophilus (strain ATCC BAA-491 / LMD-9)).